We begin with the raw amino-acid sequence, 218 residues long: Glutathione S-transferase Mu 2 (218 aa).

The GST N-terminal domain occupies 2-88 (PMTLGYWDIR…YLGRKHNLCG (87 aa)). Position 7–8 (7–8 (YW)) interacts with glutathione. Residues S27 and S44 each carry the phosphoserine modification. Residues 43-46 (RSQW), K50, 59-60 (NL), and 72-73 (QS) contribute to the glutathione site. The 125-residue stretch at 90 to 214 (TEEERIRVDV…SKPIFAKMAF (125 aa)) folds into the GST C-terminal domain. Y116 is a substrate binding site. Residue S117 is modified to Phosphoserine.

Belongs to the GST superfamily. Mu family. In terms of assembly, homodimer or heterodimer.

The protein resides in the cytoplasm. The catalysed reaction is RX + glutathione = an S-substituted glutathione + a halide anion + H(+). It carries out the reaction 11(S)-hydroxy-14(S),15(S)-epoxy-(5Z,8Z,12E)-eicosatrienoate + glutathione = (11S,15S)-dihydroxy-14(R)-S-glutathionyl-(5Z,8Z,12E)-eicosatrienoate. Functionally, conjugation of reduced glutathione to a wide number of exogenous and endogenous hydrophobic electrophiles. Participates in the formation of novel hepoxilin regioisomers. The sequence is that of Glutathione S-transferase Mu 2 from Rattus norvegicus (Rat).